A 65-amino-acid chain; its full sequence is Gallinacin-1 (65 aa).

Positions 1–19 (MRIVYLLLPFILLLAQGAA) are cleaved as a signal peptide. A propeptide spanning residues 20-25 (GSSQAL) is cleaved from the precursor. Disulfide bonds link C31–C59, C38–C53, and C43–C60.

Belongs to the beta-defensin family. In terms of tissue distribution, strong expression in the bone marrow, lung, testis. Moderate expression in the bursa and intestine. Low expression in the cloaca, gall bladder, brain and pancreas. Expressed in the vagina, ovarian stroma and the theca and granulosa layers of the ovarian follicle.

Its subcellular location is the secreted. It is found in the cytoplasmic granule. In terms of biological role, has bactericidal activity. Potent activity against E.coli ML-35, L.monocytogenes EGD and C.albicans. In Gallus gallus (Chicken), this protein is Gallinacin-1 (GAL1).